Here is a 1711-residue protein sequence, read N- to C-terminus: Reverse gyrase (1711 aa).

Residues 1–39 (MKAVYREMCPNCWGRISDERLVMRNPCEECLDEPVHADS) form an RG N-terminal-type zinc finger. Residues cysteine 9, cysteine 12, cysteine 27, and cysteine 30 each coordinate Zn(2+). ATP-binding positions include glutamine 89 and 106 to 113 (APTGMGKS). Positions 93 to 256 (VKRLLKGRSF…RLKKQMSRYL (164 aa)) constitute a Helicase ATP-binding domain. Residues 213–216 (DDVD) carry the DEAD box motif. Residues 638–1711 (DLVRSALMIV…YSEIQRYVSG (1074 aa)) form a topoisomerase I region. The Toprim domain occupies 642 to 805 (SALMIVESPN…NIKRIEFHEV (164 aa)). Glutamate 648 is a Mg(2+) binding site. The segment at 722-751 (LKRCRDCGHQFVDWEKKGVCPRCGSTNVRD) adopts an RG C-terminal-type zinc-finger fold. Zn(2+) is bound by residues cysteine 725, cysteine 728, cysteine 741, and cysteine 744. Position 774 (aspartate 774) interacts with Mg(2+). The Topo IA-type catalytic domain occupies 821–1709 (NENRVNAQIV…ELYSEIQRYV (889 aa)). A DOD-type homing endonuclease domain is found at 1160–1287 (VFGLVLGDGT…LSVYLYQIGI (128 aa)). The O-(5'-phospho-DNA)-tyrosine intermediate role is filled by tyrosine 1452.

This sequence in the N-terminal section; belongs to the DEAD box helicase family. DDVD subfamily. In the C-terminal section; belongs to the type IA topoisomerase family. As to quaternary structure, monomer. Requires Zn(2+) as cofactor. It depends on Mg(2+) as a cofactor. This protein undergoes a protein self splicing that involves a post-translational excision of the intervening region (intein) followed by peptide ligation.

It localises to the cytoplasm. It carries out the reaction ATP + H2O = ADP + phosphate + H(+). Modifies the topological state of DNA by introducing positive supercoils in an ATP-dependent process, increasing the linking number in steps of +1. Binds to single-stranded DNA, transiently cleaves and then rejoins the ends, introducing a positive supercoil in the process. The scissile phosphodiester is attacked by the catalytic tyrosine of the enzyme, resulting in the formation of a DNA-(5'-phosphotyrosyl)-enzyme intermediate. Probably involved in rewinding DNA strands in regions of the chromosome that have opened up to allow replication, transcription, DNA repair and/or for DNA protection. This is Reverse gyrase from Thermococcus kodakarensis (strain ATCC BAA-918 / JCM 12380 / KOD1) (Pyrococcus kodakaraensis (strain KOD1)).